Here is a 605-residue protein sequence, read N- to C-terminus: Threonine--tRNA ligase (605 aa).

The tract at residues 195–497 (DHRKVGKELG…LIEEYAGDFP (303 aa)) is catalytic. The Zn(2+) site is built by Cys-294, His-345, and His-474.

This sequence belongs to the class-II aminoacyl-tRNA synthetase family. In terms of assembly, homodimer. It depends on Zn(2+) as a cofactor.

The protein resides in the cytoplasm. The enzyme catalyses tRNA(Thr) + L-threonine + ATP = L-threonyl-tRNA(Thr) + AMP + diphosphate + H(+). Its function is as follows. Catalyzes the attachment of threonine to tRNA(Thr) in a two-step reaction: L-threonine is first activated by ATP to form Thr-AMP and then transferred to the acceptor end of tRNA(Thr). Also edits incorrectly charged L-seryl-tRNA(Thr). This chain is Threonine--tRNA ligase, found in Thermosynechococcus vestitus (strain NIES-2133 / IAM M-273 / BP-1).